The chain runs to 199 residues: NAD(P)H dehydrogenase (quinone) (199 aa).

The Flavodoxin-like domain maps to 4–190; the sequence is MLVLYYSAYG…DGARFQGRRV (187 aa). FMN contacts are provided by residues 10–15 and 78–80; these read SAYGYM and TRY. Residue Tyr12 participates in NAD(+) binding. Trp98 is a binding site for substrate. FMN is bound by residues 113 to 119 and His134; that span reads STATQHG. Residues 157 to 181 form a disordered region; sequence GGAPYGMTTTADGDGSRQPSAQELD. Residues 163–177 show a composition bias toward polar residues; the sequence is MTTTADGDGSRQPSA.

The protein belongs to the WrbA family. The cofactor is FMN.

The catalysed reaction is a quinone + NADH + H(+) = a quinol + NAD(+). It carries out the reaction a quinone + NADPH + H(+) = a quinol + NADP(+). The chain is NAD(P)H dehydrogenase (quinone) from Brucella melitensis biotype 2 (strain ATCC 23457).